Consider the following 513-residue polypeptide: V-type proton ATPase subunit B, kidney isoform (513 aa).

R394 contributes to the ATP binding site. The short motif at 510 to 513 is the PDZ-binding element; the sequence is DTAL.

This sequence belongs to the ATPase alpha/beta chains family. As to quaternary structure, V-ATPase is a heteromultimeric enzyme made up of two complexes: the ATP-hydrolytic V1 complex and the proton translocation V0 complex. The V1 complex consists of three catalytic AB heterodimers that form a heterohexamer, three peripheral stalks each consisting of EG heterodimers, one central rotor including subunits D and F, and the regulatory subunits C and H. The proton translocation complex V0 consists of the proton transport subunit a, a ring of proteolipid subunits c9c'', rotary subunit d, subunits e and f, and the accessory subunits ATP6AP1/Ac45 and ATP6AP2/PRR. Forms a complex with NHERF1 and SCL4A7. In terms of tissue distribution, kidney; localizes to early distal nephron, encompassing thick ascending limbs and distal convoluted tubules (at protein level). Expressed in the cochlea and endolymphatic sac.

It is found in the apical cell membrane. The protein resides in the basolateral cell membrane. In terms of biological role, non-catalytic subunit of the V1 complex of vacuolar(H+)-ATPase (V-ATPase), a multisubunit enzyme composed of a peripheral complex (V1) that hydrolyzes ATP and a membrane integral complex (V0) that translocates protons. V-ATPase is responsible for acidifying and maintaining the pH of intracellular compartments and in some cell types, is targeted to the plasma membrane, where it is responsible for acidifying the extracellular environment. Essential for the proper assembly and activity of V-ATPase. In renal intercalated cells, mediates secretion of protons (H+) into the urine thereby ensuring correct urinary acidification. Required for optimal olfactory function by mediating the acidification of the nasal olfactory epithelium. This Homo sapiens (Human) protein is V-type proton ATPase subunit B, kidney isoform (ATP6V1B1).